We begin with the raw amino-acid sequence, 254 residues long: MKFFVLTIFPQFFEGFINTGIVSRAVKKGIVDIKSVDLRDFTEDKHRTVDDVVYGGGPGMLLKPEPIFKAYDSITEKGHKPYVLITEPWGRKFDQKFAEELSKKEEIMIICGRYEGVDERVKSIVDEEVSIGDFILSGGEPAALVIMDAVIRLIPGVVGDSESLNADSFSNDGLLGYPNYTRPAEYRGMKVPEVLRSGNHKLIKLWRRWKQIEKTAVRKPELLKKADLSDSDKKIIDAIKKGLSFEDFLKKYKV.

Residues Gly-112 and 131–136 (IGDFIL) each bind S-adenosyl-L-methionine.

This sequence belongs to the RNA methyltransferase TrmD family. As to quaternary structure, homodimer.

The protein localises to the cytoplasm. The catalysed reaction is guanosine(37) in tRNA + S-adenosyl-L-methionine = N(1)-methylguanosine(37) in tRNA + S-adenosyl-L-homocysteine + H(+). Its function is as follows. Specifically methylates guanosine-37 in various tRNAs. The sequence is that of tRNA (guanine-N(1)-)-methyltransferase from Persephonella marina (strain DSM 14350 / EX-H1).